Here is a 541-residue protein sequence, read N- to C-terminus: Chaperonin GroEL 2 (541 aa).

ATP contacts are provided by residues 29–32, 86–90, Gly413, 476–478, and Asp492; these read TLGP, DGTTT, and NAA.

The protein belongs to the chaperonin (HSP60) family. In terms of assembly, forms a cylinder of 14 subunits composed of two heptameric rings stacked back-to-back. Interacts with the co-chaperonin GroES.

Its subcellular location is the secreted. The protein resides in the capsule. It is found in the cell surface. The protein localises to the cell wall. It catalyses the reaction ATP + H2O + a folded polypeptide = ADP + phosphate + an unfolded polypeptide.. In terms of biological role, together with its co-chaperonin GroES, plays an essential role in assisting protein folding. The GroEL-GroES system forms a nano-cage that allows encapsulation of the non-native substrate proteins and provides a physical environment optimized to promote and accelerate protein folding. This chain is Chaperonin GroEL 2, found in Mycobacterium ulcerans (strain Agy99).